A 420-amino-acid polypeptide reads, in one-letter code: Ammonia monooxygenase beta subunit (420 aa).

The first 25 residues, 1–25, serve as a signal peptide directing secretion; the sequence is MGIKNLYKRGVMGLYGVAYAVAALA. 3 residues coordinate Cu cation: H38, H142, and H144. A run of 2 helical transmembrane segments spans residues 193 to 213 and 240 to 260; these read GIFW…VFTA and ITWV…RYTE.

The soluble ammonia monooxygenase is a nonamer composed of three alpha subunits (AmoA), three beta subunits (AmoB) and three gamma subunits (Cytochrome c1 PetC). Requires Cu(2+) as cofactor.

The protein resides in the cell membrane. It is found in the cytoplasm. The enzyme catalyses AH2 + NH4(+) + O2 = hydroxylamine + A + H2O + H(+). In vitro, inhibited by acetylene. Its function is as follows. Part of the ammonia monooxygenase complex, which catalyzes the oxidation of ammonia to hydroxylamine, the first reaction in the process of ammonia oxidation to nitrite. The chain is Ammonia monooxygenase beta subunit from Nitrosomonas europaea (strain ATCC 19718 / CIP 103999 / KCTC 2705 / NBRC 14298).